We begin with the raw amino-acid sequence, 34 residues long: U2-theraphotoxin-Bs1a (34 aa).

Cystine bridges form between Cys-2-Cys-16, Cys-9-Cys-21, and Cys-15-Cys-28.

As to expression, expressed by the venom gland.

Its subcellular location is the secreted. The polypeptide is U2-theraphotoxin-Bs1a (Brachypelma smithi (Mexican red knee tarantula)).